A 226-amino-acid polypeptide reads, in one-letter code: Biosynthetic peptidoglycan transglycosylase (226 aa).

The helical transmembrane segment at V7–G29 threads the bilayer.

Belongs to the glycosyltransferase 51 family.

It localises to the cell inner membrane. It catalyses the reaction [GlcNAc-(1-&gt;4)-Mur2Ac(oyl-L-Ala-gamma-D-Glu-L-Lys-D-Ala-D-Ala)](n)-di-trans,octa-cis-undecaprenyl diphosphate + beta-D-GlcNAc-(1-&gt;4)-Mur2Ac(oyl-L-Ala-gamma-D-Glu-L-Lys-D-Ala-D-Ala)-di-trans,octa-cis-undecaprenyl diphosphate = [GlcNAc-(1-&gt;4)-Mur2Ac(oyl-L-Ala-gamma-D-Glu-L-Lys-D-Ala-D-Ala)](n+1)-di-trans,octa-cis-undecaprenyl diphosphate + di-trans,octa-cis-undecaprenyl diphosphate + H(+). It functions in the pathway cell wall biogenesis; peptidoglycan biosynthesis. Its function is as follows. Peptidoglycan polymerase that catalyzes glycan chain elongation from lipid-linked precursors. This is Biosynthetic peptidoglycan transglycosylase from Nitrobacter winogradskyi (strain ATCC 25391 / DSM 10237 / CIP 104748 / NCIMB 11846 / Nb-255).